Consider the following 473-residue polypeptide: Homeobox protein ATH1 (473 aa).

Positions 205 to 221 (SKYLHSVQEILSHFAAY) are SR/KY domain. The BELL domain stretch occupies residues 266–336 (QRRALEAKKT…NLRERICKKI (71 aa)). Residues 372-434 (IWRPQRGLPE…NARVRLWKPM (63 aa)) constitute a DNA-binding region (homeobox). Residues 448-473 (NNSHIQPNGPTLRMPKSVMMSQAMHK) are disordered.

The protein belongs to the TALE/BELL homeobox family. As to quaternary structure, may form heterodimeric complex with the TALE/KNOX protein STM. Most abundant in flowers.

The protein resides in the nucleus. Functionally, transcription factor which may be involved in the signal transduction pathway downstream of the COP1 gene. Controls floral competency as a specific activator of FLC expression. Is responsive of the nuclear import of SHOOT MERISTEMLESS (STM). The sequence is that of Homeobox protein ATH1 (ATH1) from Arabidopsis thaliana (Mouse-ear cress).